The sequence spans 64 residues: MALPKYKTSRANTHSRRANWKATAAATVNCPNCGAPALPHMACPSCGNYRGRTYRSAIQPAHTK.

Belongs to the bacterial ribosomal protein bL32 family.

This Bifidobacterium longum (strain DJO10A) protein is Large ribosomal subunit protein bL32.